The primary structure comprises 932 residues: Glycine dehydrogenase (decarboxylating) (932 aa).

Lys-685 is subject to N6-(pyridoxal phosphate)lysine.

The protein belongs to the GcvP family. In terms of assembly, the glycine cleavage system is composed of four proteins: P, T, L and H. It depends on pyridoxal 5'-phosphate as a cofactor.

The enzyme catalyses N(6)-[(R)-lipoyl]-L-lysyl-[glycine-cleavage complex H protein] + glycine + H(+) = N(6)-[(R)-S(8)-aminomethyldihydrolipoyl]-L-lysyl-[glycine-cleavage complex H protein] + CO2. In terms of biological role, the glycine cleavage system catalyzes the degradation of glycine. The P protein binds the alpha-amino group of glycine through its pyridoxal phosphate cofactor; CO(2) is released and the remaining methylamine moiety is then transferred to the lipoamide cofactor of the H protein. The chain is Glycine dehydrogenase (decarboxylating) from Brucella canis (strain ATCC 23365 / NCTC 10854 / RM-666).